The primary structure comprises 370 residues: 3-isopropylmalate dehydrogenase (370 aa).

77-90 is an NAD(+) binding site; the sequence is GPKWDSVPYEVRPE. Substrate contacts are provided by Arg-97, Arg-107, Arg-135, and Asp-226. Mg(2+)-binding residues include Asp-226, Asp-250, and Asp-254. 290–302 provides a ligand contact to NAD(+); sequence GSAPDIAGKGIAN.

It belongs to the isocitrate and isopropylmalate dehydrogenases family. LeuB type 1 subfamily. Homodimer. It depends on Mg(2+) as a cofactor. Requires Mn(2+) as cofactor.

Its subcellular location is the cytoplasm. The catalysed reaction is (2R,3S)-3-isopropylmalate + NAD(+) = 4-methyl-2-oxopentanoate + CO2 + NADH. It participates in amino-acid biosynthesis; L-leucine biosynthesis; L-leucine from 3-methyl-2-oxobutanoate: step 3/4. Functionally, catalyzes the oxidation of 3-carboxy-2-hydroxy-4-methylpentanoate (3-isopropylmalate) to 3-carboxy-4-methyl-2-oxopentanoate. The product decarboxylates to 4-methyl-2 oxopentanoate. The polypeptide is 3-isopropylmalate dehydrogenase (Brucella abortus (strain 2308)).